The chain runs to 59 residues: UPF0337 protein MM_2677 (59 aa).

Basic and acidic residues-rich tracts occupy residues methionine 1–alanine 24 and methionine 33–lysine 59. Positions methionine 1 to lysine 59 are disordered.

The protein belongs to the UPF0337 (CsbD) family.

The chain is UPF0337 protein MM_2677 from Methanosarcina mazei (strain ATCC BAA-159 / DSM 3647 / Goe1 / Go1 / JCM 11833 / OCM 88) (Methanosarcina frisia).